The chain runs to 190 residues: Probable nicotinate-nucleotide adenylyltransferase (190 aa).

The protein belongs to the NadD family.

The catalysed reaction is nicotinate beta-D-ribonucleotide + ATP + H(+) = deamido-NAD(+) + diphosphate. It functions in the pathway cofactor biosynthesis; NAD(+) biosynthesis; deamido-NAD(+) from nicotinate D-ribonucleotide: step 1/1. Functionally, catalyzes the reversible adenylation of nicotinate mononucleotide (NaMN) to nicotinic acid adenine dinucleotide (NaAD). The polypeptide is Probable nicotinate-nucleotide adenylyltransferase (Borrelia turicatae (strain 91E135)).